The primary structure comprises 315 residues: Fucose-specific lectin (315 aa).

6 tandem repeats follow at residues 2–53 (STPG…KNVI), 54–103 (GNAK…GGAK), 104–155 (FQVA…LGGA), 156–207 (LPGT…TIFD), 208–260 (RAPP…ITPV), and 261–315 (IQGS…LPPA). The 6 X approximate tandem repeats stretch occupies residues 2–315 (STPGAQQVLF…QLGRSALPPA (314 aa)). Alpha-L-fucose contacts are provided by R25, E37, W44, R73, E85, W94, G98, R126, E138, W146, T150, R177, Q189, W198, R230, and Q242. Zn(2+) is bound by residues C244, D246, and H252. The alpha-L-fucose site is built by R282 and E296.

Belongs to the fungal fucose-specific lectin family. In terms of assembly, homodimer.

In terms of biological role, multispecific lectin that is able to recognize L-fucose in all possible linkages. These could be found not only in decomposed plant matter in soil, which is the natural environment for A.fumigatus, but also in various epitopes on human tissues. Mediates binding of A.fumigatus conidia to airway mucin in a fucose dependent manner. Stimulates IL-8 production by human bronchial cells in a dose-dependent manner, contributing to the inflammatory response observed upon the exposure of a patient to A.fumigatus, and thus might be an important virulence factor involved in an early stage of A.fumigatus infection. The protein is Fucose-specific lectin of Aspergillus fumigatus (strain ATCC MYA-4609 / CBS 101355 / FGSC A1100 / Af293) (Neosartorya fumigata).